A 359-amino-acid chain; its full sequence is MNIYDQLQVVEDRYEELGELLSDPDVVSDTKRFMELSKEEASNRDTVIAYREYKQVLQNIVDAEEMIKESGGDADLEELAKQELKDAKAEKEEYEEKLKILLLPKDPNDDKNIILEIRGAAGGDEAALFAGDLLTMYQKYAEAQGWRFEVMEASMNGVGGFKEVVAMVSGQSVYSKLKYESGAHRVQRVPVTESQGRVHTSTATVLVMPEVEEVEYDIDPKDLRVDIYHASGAGGQNVNKVATAVRIVHLPTNIKVEMQEERTQQKNREKAMKIIRARVADHFAQIAQDEQDAERKSTIGTGDRSERIRTYNFPQNRVTDHRIGLTLQKLDTILSGKLDEVVDALVLYDQTQKLEELNK.

At glutamine 236 the chain carries N5-methylglutamine.

The protein belongs to the prokaryotic/mitochondrial release factor family. Post-translationally, methylated by PrmC. Methylation increases the termination efficiency of RF1.

Its subcellular location is the cytoplasm. Peptide chain release factor 1 directs the termination of translation in response to the peptide chain termination codons UAG and UAA. The chain is Peptide chain release factor 1 from Streptococcus pneumoniae serotype 4 (strain ATCC BAA-334 / TIGR4).